Reading from the N-terminus, the 302-residue chain is Aspartate carbamoyltransferase catalytic subunit (302 aa).

Carbamoyl phosphate is bound by residues Arg53 and Thr54. Residue Lys82 coordinates L-aspartate. Carbamoyl phosphate contacts are provided by Arg103, His131, and Gln134. L-aspartate is bound by residues Arg164 and Arg223. Residues Leu260 and Pro261 each contribute to the carbamoyl phosphate site.

It belongs to the aspartate/ornithine carbamoyltransferase superfamily. ATCase family. In terms of assembly, heterooligomer of catalytic and regulatory chains.

The catalysed reaction is carbamoyl phosphate + L-aspartate = N-carbamoyl-L-aspartate + phosphate + H(+). The protein operates within pyrimidine metabolism; UMP biosynthesis via de novo pathway; (S)-dihydroorotate from bicarbonate: step 2/3. Catalyzes the condensation of carbamoyl phosphate and aspartate to form carbamoyl aspartate and inorganic phosphate, the committed step in the de novo pyrimidine nucleotide biosynthesis pathway. The chain is Aspartate carbamoyltransferase catalytic subunit from Methanococcus maripaludis (strain DSM 14266 / JCM 13030 / NBRC 101832 / S2 / LL).